Here is a 148-residue protein sequence, read N- to C-terminus: Trypsin inhibitor CMe (148 aa).

Positions 1 to 24 (MAFKYQLLLSAAVMLAILVATATS) are cleaved as a signal peptide.

This sequence belongs to the protease inhibitor I6 (cereal trypsin/alpha-amylase inhibitor) family. Five disulfide bonds, which are essential for the inhibitor activity, are probably present. As to expression, expressed in the developing endosperm. Not detected in embryo, aleurone, coleoptile, roots and leaves.

The protein resides in the secreted. Its function is as follows. Inhibits trypsin in vitro. Probably plays a protective role through inhibition of insect midgut proteases. This chain is Trypsin inhibitor CMe (ITR1), found in Hordeum vulgare (Barley).